We begin with the raw amino-acid sequence, 127 residues long: Fluoride-specific ion channel FluC (127 aa).

A run of 4 helical transmembrane segments spans residues 4–24, 35–55, 71–91, and 103–123; these read LLLA…LLSM, LGTL…FAWF, TGFC…VFLL, and VFVN…LFSA. Na(+) is bound by residues Gly-75 and Thr-78.

Belongs to the fluoride channel Fluc/FEX (TC 1.A.43) family.

It is found in the cell inner membrane. It carries out the reaction fluoride(in) = fluoride(out). With respect to regulation, na(+) is not transported, but it plays an essential structural role and its presence is essential for fluoride channel function. Its function is as follows. Fluoride-specific ion channel. Important for reducing fluoride concentration in the cell, thus reducing its toxicity. The polypeptide is Fluoride-specific ion channel FluC (Escherichia coli O8 (strain IAI1)).